The sequence spans 622 residues: Low affinity potassium transport system protein Kup (622 aa).

12 consecutive transmembrane segments (helical) span residues 9–29, 46–66, 101–121, 137–157, 165–185, 213–233, 247–267, 276–296, 337–357, 363–383, 395–415, and 416–436; these read LSAV…TSPL, PDVV…VVSV, ILVV…VITP, PALD…LFVI, VGKL…LLGL, VSFF…ALYA, WFTV…ALLL, PFFL…ATLA, IYIP…IIGF, LAAA…ILFC, FLVV…FSAN, and VLKL…MFII.

It belongs to the HAK/KUP transporter (TC 2.A.72) family.

The protein localises to the cell inner membrane. The catalysed reaction is K(+)(in) + H(+)(in) = K(+)(out) + H(+)(out). In terms of biological role, responsible for the low-affinity transport of potassium into the cell. Likely operates as a K(+):H(+) symporter. This Yersinia pestis (strain Pestoides F) protein is Low affinity potassium transport system protein Kup.